A 230-amino-acid chain; its full sequence is MSDHKTLIKNGMWANNPALVQLLGLCPLLAVSSTVTNALGLGIATLLVLVGSNVSVSLVRNHVPKEVRIPVFVMIIASLVTCVQLLMNAYAYGLYLSLGIFIPLIVTNCIIIGRAEAFASKNEVLPAAQDGFWMGLGMTSVLVVLGAMREIIGNGTLFDGADLLLGDWASVLRIQIFQFDNSFLLALLPPGAFIGVGFLIALKNIIDNQAKSRQPKQEKPVIERARVTNA.

A run of 6 helical transmembrane segments spans residues 11–31 (GMWA…LLAV), 39–59 (LGLG…VSLV), 69–89 (IPVF…LMNA), 93–113 (GLYL…IIIG), 132–152 (FWMG…REII), and 182–202 (SFLL…LIAL).

Belongs to the NqrDE/RnfAE family. The complex is composed of six subunits: RnfA, RnfB, RnfC, RnfD, RnfE and RnfG.

It is found in the cell inner membrane. In terms of biological role, part of a membrane-bound complex that couples electron transfer with translocation of ions across the membrane. The protein is Ion-translocating oxidoreductase complex subunit E of Vibrio atlanticus (strain LGP32) (Vibrio splendidus (strain Mel32)).